Here is a 34-residue protein sequence, read N- to C-terminus: Tau-theraphotoxin-Pc1c (34 aa).

3 disulfide bridges follow: Cys2/Cys16, Cys9/Cys21, and Cys15/Cys28. Phenylalanine amide is present on Phe34.

The protein belongs to the neurotoxin 10 (Hwtx-1) family. 62 (Vatx) subfamily. In terms of tissue distribution, expressed by the venom gland.

It is found in the secreted. Functionally, selectively activates mammalian TRPV1, or capsaicin receptor, a non-selective cation channel expressed by sensory neurons of the pain pathway. Is more potent than VaTx1 and VaTx2. Interacts with distinct regions of the channel than capsaicin, since it only acts on the extracellular face of the channel, and capsaicin binds to the cytosolic side. Also activates avian TRPV1, which is insensitive to capsaicin. In mice, elicits pain-related behaviors, such as licking and flinching of the affected limb. The paw of toxin-injected mice shows substantial edema. This Psalmopoeus cambridgei (Trinidad chevron tarantula) protein is Tau-theraphotoxin-Pc1c.